Reading from the N-terminus, the 417-residue chain is MAEIKNYSLNFGPQHPAAHGVLRLVLELDGEVVQRADPHIGLLHRATEKLAEHKTFIQSLPYMDRLDYVSMMCNEHAYCLAIEKLLGIDVPLRAQYIRVMFSEITRLLNHLMWLGSHGNDCGSSTILIYTFREREDLFDMYEAVSGARMHAAYFRPGGVYRDLPDSMPQYQASKVRNAKAIEVLNQNRQGSLLDFIDDFTQRFPKCVDEYETLLTDNRIWKQRTVDIGIVTPERALNLGMTGPMLRGSGIAWDLRKKQPYDAYDRVEFDIPVGKTGDCYDRYLVRVQEMRQSNRIIKQCVDWLKANPGPVITDNHKVAPPSRESMKSNMEELIHHFKLFTEGFRVPEGEAYAAVEHPKGEFGIYLVSDGANKPYRLKIRAPGFAHLATLDEMARGHMIADAVAIIGTMDIVFGEIDR.

It belongs to the complex I 49 kDa subunit family. NDH-1 is composed of 14 different subunits. Subunits NuoB, C, D, E, F, and G constitute the peripheral sector of the complex.

It is found in the cell inner membrane. It carries out the reaction a quinone + NADH + 5 H(+)(in) = a quinol + NAD(+) + 4 H(+)(out). In terms of biological role, NDH-1 shuttles electrons from NADH, via FMN and iron-sulfur (Fe-S) centers, to quinones in the respiratory chain. The immediate electron acceptor for the enzyme in this species is believed to be ubiquinone. Couples the redox reaction to proton translocation (for every two electrons transferred, four hydrogen ions are translocated across the cytoplasmic membrane), and thus conserves the redox energy in a proton gradient. This chain is NADH-quinone oxidoreductase subunit D, found in Paracidovorax citrulli (strain AAC00-1) (Acidovorax citrulli).